Reading from the N-terminus, the 219-residue chain is Sugar transporter SWEET1 (219 aa).

7 helical membrane passes run 3-23 (FLQL…TTGL), 38-58 (VQFL…YYGL), 63-83 (GTVI…IATY), 98-118 (LLMV…ISPG), 125-145 (LGLT…ADLL), 156-176 (LSFS…LYGL), and 189-209 (PGIF…AVIP). Residues 5 to 90 (QLLSCACIIF…ATYCHYTKEK (86 aa)) form the MtN3/slv 1 domain. The MtN3/slv 2 domain occupies 124 to 204 (QLGLTCSVFT…LIRFFLFWWF (81 aa)).

It belongs to the SWEET sugar transporter family.

The protein resides in the golgi apparatus membrane. The protein localises to the cell membrane. Functionally, mediates sugar transport across membranes. The sequence is that of Sugar transporter SWEET1 (slc50a1) from Danio rerio (Zebrafish).